We begin with the raw amino-acid sequence, 306 residues long: Porphobilinogen deaminase (306 aa).

Cys239 bears the S-(dipyrrolylmethanemethyl)cysteine mark.

It belongs to the HMBS family. As to quaternary structure, monomer. It depends on dipyrromethane as a cofactor.

The enzyme catalyses 4 porphobilinogen + H2O = hydroxymethylbilane + 4 NH4(+). It participates in porphyrin-containing compound metabolism; protoporphyrin-IX biosynthesis; coproporphyrinogen-III from 5-aminolevulinate: step 2/4. Functionally, tetrapolymerization of the monopyrrole PBG into the hydroxymethylbilane pre-uroporphyrinogen in several discrete steps. The polypeptide is Porphobilinogen deaminase (hemC) (Helicobacter pylori (strain J99 / ATCC 700824) (Campylobacter pylori J99)).